The sequence spans 450 residues: Glucose-6-phosphate isomerase (450 aa).

The active-site Proton donor is the E289. Residues H310 and K424 contribute to the active site.

Belongs to the GPI family.

It is found in the cytoplasm. The enzyme catalyses alpha-D-glucose 6-phosphate = beta-D-fructose 6-phosphate. It functions in the pathway carbohydrate biosynthesis; gluconeogenesis. The protein operates within carbohydrate degradation; glycolysis; D-glyceraldehyde 3-phosphate and glycerone phosphate from D-glucose: step 2/4. Catalyzes the reversible isomerization of glucose-6-phosphate to fructose-6-phosphate. This chain is Glucose-6-phosphate isomerase, found in Leptospira biflexa serovar Patoc (strain Patoc 1 / Ames).